Reading from the N-terminus, the 354-residue chain is Membrane progestin receptor alpha-B (354 aa).

Over 1 to 76 (MATVVMEQIG…LTLFQRHNES (76 aa)) the chain is Cytoplasmic. The chain crosses the membrane as a helical span at residues 77–97 (VNVWTHLLASLIILVKFQELS). Topologically, residues 98–110 (ETVDFLRDPHAQP) are extracellular. A helical transmembrane segment spans residues 111–131 (MFILLLAAFTYLGCSALAHLL). Residues 132–141 (SAKSEISHYT) lie on the Cytoplasmic side of the membrane. A helical membrane pass occupies residues 142–162 (FYFLDYVGVAVYQYGSALAHF). Topologically, residues 163–175 (YYVVEEEWHAQVR) are extracellular. Residues 176–196 (TFFLPASAFLAWLSCTGCCYG) traverse the membrane as a helical segment. The Cytoplasmic segment spans residues 197-244 (KYASPKLPKFVHKLFQVVPSGLAYCLDISPVLHRIYRCYSSEHWCADQ). The chain crosses the membrane as a helical span at residues 245 to 265 (AVVYHCYQVLFFLISAYFFSY). Topologically, residues 266–277 (PHPERWFPGRCD) are extracellular. The chain crosses the membrane as a helical span at residues 278–298 (FIGQGHQIFHVFLVLCTLVQI). Over 299–318 (EAVRLDYTERRRLYEHLHGD) the chain is Cytoplasmic. The chain crosses the membrane as a helical span at residues 319–339 (LAHDAVALFIFTACCSALTAF). Residues 340–354 (YVRKRVKTYLEEKQE) are Extracellular-facing.

It belongs to the ADIPOR family.

Its subcellular location is the cell membrane. In terms of biological role, steroid membrane receptor. Signals upon progestin binding, resulting in rapid activation of MAPK and down-regulation of adenylyl cyclase activity. Interacts with steroids with varying degrees of affinity, showing specificity for activation by the maturation-inducing steroid (MIS) 4-pregnen-17,20beta-diol-3-one (17,20beta-DHP). Capable of mediating progestin-induced oocyte maturation. The protein is Membrane progestin receptor alpha-B (paqr7b) of Danio rerio (Zebrafish).